The following is a 1228-amino-acid chain: DNA-directed RNA polymerase subunit beta'' (1228 aa).

Positions 222, 296, 303, and 306 each coordinate Zn(2+).

It belongs to the RNA polymerase beta' chain family. RpoC2 subfamily. In terms of assembly, in plastids the minimal PEP RNA polymerase catalytic core is composed of four subunits: alpha, beta, beta', and beta''. When a (nuclear-encoded) sigma factor is associated with the core the holoenzyme is formed, which can initiate transcription. The cofactor is Zn(2+).

It localises to the plastid. Its subcellular location is the chloroplast. The catalysed reaction is RNA(n) + a ribonucleoside 5'-triphosphate = RNA(n+1) + diphosphate. DNA-dependent RNA polymerase catalyzes the transcription of DNA into RNA using the four ribonucleoside triphosphates as substrates. This is DNA-directed RNA polymerase subunit beta'' from Gracilaria tenuistipitata var. liui (Red alga).